The primary structure comprises 70 residues: Pyruvate-flavodoxin oxidoreductase (70 aa).

This sequence belongs to the pyruvate:ferredoxin/flavodoxin oxidoreductase family.

It catalyses the reaction oxidized [flavodoxin] + pyruvate + CoA + 2 H(+) = reduced [flavodoxin] + acetyl-CoA + CO2. Oxidoreductase required for the transfer of electrons from pyruvate to flavodoxin, which reduces nitrogenase. The protein is Pyruvate-flavodoxin oxidoreductase (nifJ) of Anabaena variabilis.